The chain runs to 393 residues: Probable protein phosphatase 2C 72 (393 aa).

Residues 49–357 (EFSMAVVQAN…DDITVVVVFF (309 aa)) enclose the PPM-type phosphatase domain. Residues aspartate 88 and glycine 89 each contribute to the Mn(2+) site. The chain crosses the membrane as a helical span at residues 147–167 (LAAVGSCCLVGVICAGNLYIA). The Mn(2+) site is built by aspartate 289 and aspartate 348.

Belongs to the PP2C family. Requires Mg(2+) as cofactor. Mn(2+) is required as a cofactor.

The protein localises to the membrane. It catalyses the reaction O-phospho-L-seryl-[protein] + H2O = L-seryl-[protein] + phosphate. The enzyme catalyses O-phospho-L-threonyl-[protein] + H2O = L-threonyl-[protein] + phosphate. The sequence is that of Probable protein phosphatase 2C 72 from Oryza sativa subsp. japonica (Rice).